The chain runs to 224 residues: 7-cyano-7-deazaguanine synthase (224 aa).

ATP is bound at residue L8–I18. Zn(2+) contacts are provided by C186, C196, C199, and C202.

It belongs to the QueC family. The cofactor is Zn(2+).

It carries out the reaction 7-carboxy-7-deazaguanine + NH4(+) + ATP = 7-cyano-7-deazaguanine + ADP + phosphate + H2O + H(+). It functions in the pathway purine metabolism; 7-cyano-7-deazaguanine biosynthesis. Its function is as follows. Catalyzes the ATP-dependent conversion of 7-carboxy-7-deazaguanine (CDG) to 7-cyano-7-deazaguanine (preQ(0)). In Xanthomonas axonopodis pv. citri (strain 306), this protein is 7-cyano-7-deazaguanine synthase.